Reading from the N-terminus, the 97-residue chain is Peptide Y (97 aa).

Positions 1-28 (MANMLRSWMMLAALAVCLLVCLSSFADA) are cleaved as a signal peptide. The residue at position 64 (Y64) is a Tyrosine amide. Residues 68 to 97 (STPEQAVAWLLFGADSSQDAEPRLDYSDQW) constitute a propeptide, C-terminal extension.

It belongs to the NPY family.

It localises to the secreted. This is Peptide Y from Dicentrarchus labrax (European seabass).